Here is a 510-residue protein sequence, read N- to C-terminus: RNA-splicing ligase RtcB homolog (510 aa).

Residues Asp-124, Cys-127, His-232, His-264, and His-358 each coordinate Mn(2+). Residue 231-235 (NHYAE) participates in GMP binding. Residues 358–359 (HN), 407–410 (GGTM), Ser-414, 433–436 (HGAG), and Lys-509 each bind GMP. The active-site GMP-histidine intermediate is His-433.

This sequence belongs to the RtcB family. Catalytic component of the tRNA-splicing ligase complex. Requires Mn(2+) as cofactor.

It carries out the reaction a 3'-end 3'-phospho-ribonucleotide-RNA + a 5'-end dephospho-ribonucleoside-RNA + GTP = a ribonucleotidyl-ribonucleotide-RNA + GMP + diphosphate. The enzyme catalyses a 3'-end 2',3'-cyclophospho-ribonucleotide-RNA + a 5'-end dephospho-ribonucleoside-RNA + GTP + H2O = a ribonucleotidyl-ribonucleotide-RNA + GMP + diphosphate + H(+). Catalytic subunit of the tRNA-splicing ligase complex that acts by directly joining spliced tRNA halves to mature-sized tRNAs by incorporating the precursor-derived splice junction phosphate into the mature tRNA as a canonical 3',5'-phosphodiester. May act as an RNA ligase with broad substrate specificity, and may function toward other RNAs. The sequence is that of RNA-splicing ligase RtcB homolog from Trichoplax adhaerens (Trichoplax reptans).